Reading from the N-terminus, the 449-residue chain is MVANLPALFSLGVFVGVILLIMSEKIHLTIAAFLGALILVFTHVITLKEGIDYISQSYATLALFFGVMVLVRSFEPTKIFEYLATQMVLLAKGSGKLLMLGVIAITTPICAVLPNATTVMLLAPLIPPLAQEIGVDFVPILILMVFVANSAGLLTLVGDPATFIVGDAINISFNDYLFKLSFMGVLAIVSIVVITPFLFRHIWRSRFTHLEDLPHPQINHPKVLMAGGVIITLVLIFFVIGESLPVPIPPASVALMGACLALLLASQSKIDTVHNILRDVDWSTLIFFMSIFVIIGSLEKTGVTASLAQLLAVVVGQNIAFGAIVLVFTVGLLSSVVPNIPLVVAMVPLLKQYVVNIGFAGPEILGANFDGQLPAEVLPLFYAMMFGATLGGNGTLVGASSNIVAAGISEQHGRPISFHRFLRYGLPVMAVQLVVAALFVAWLMFTQQG.

The next 13 membrane-spanning stretches (helical) occupy residues 1 to 21, 26 to 46, 51 to 71, 97 to 117, 137 to 157, 178 to 198, 223 to 243, 244 to 264, 285 to 305, 310 to 330, 340 to 360, 377 to 397, and 425 to 445; these read MVAN…ILLI, IHLT…HVIT, IDYI…MVLV, LLML…PNAT, FVPI…LTLV, FKLS…TPFL, VLMA…IGES, LPVP…ALLL, LIFF…GVTA, LLAV…VFTV, IPLV…IGFA, VLPL…GTLV, and GLPV…WLMF.

Belongs to the CitM (TC 2.A.11) transporter family.

It is found in the cell membrane. This is an uncharacterized protein from Synechocystis sp. (strain ATCC 27184 / PCC 6803 / Kazusa).